Consider the following 370-residue polypeptide: Ig heavy chain C region (370 aa).

Ig-like domains lie at 40 to 134, 145 to 237, and 247 to 347; these read PTVI…RNIT, PAIK…DSIH, and PSVS…RTVN. N-linked (GlcNAc...) asparagine glycosylation is found at asparagine 98, asparagine 132, asparagine 177, asparagine 343, asparagine 347, and asparagine 357.

This Heterodontus francisci (Horn shark) protein is Ig heavy chain C region.